We begin with the raw amino-acid sequence, 20 residues long: Toxin CpTx-4a (20 aa).

It belongs to the spider toxin CSTX family. As to expression, expressed by the venom gland.

The protein localises to the secreted. Its function is as follows. Spider venom toxin that exhibits cytolytic activity by forming an alpha-helix across the membrane. Lethal to insect larvae. The chain is Toxin CpTx-4a from Cheiracanthium punctorium (Yellow sac spider).